Reading from the N-terminus, the 370-residue chain is MAESLFYQLAAAGVQGLTPYQPGKPIEELEREYGVRGAVKLASNENPLGPSPMAIDAIYGVLGESGRYPDGNGFALKTALSQCLGIPANQITLGNGSSDLLEFAARVLISPEHEVIYSQYCFALYPLLIQILGAKGHAVPAKGFGHDLEAMVKAVNSQTRLVYIANPNNPTGTWLHSDELEAFLAALPEHVLVVLDEAYYEYVNEAQYPYSLAWMSRYPNLMITRTFSKIYGLAGLRIGYGVSHPDLADLMNRVRPPFNVNSLALAAATAALQDHDHLQRSRKVNQAGMAQLTMAFTALGLDYIPSVANFVTVDVKQSGDKVYENLLRHGVIVRPMTGYGLPRHVRVTVGREEENARFIQVLETVLEEFR.

Residue K229 is modified to N6-(pyridoxal phosphate)lysine.

Belongs to the class-II pyridoxal-phosphate-dependent aminotransferase family. Histidinol-phosphate aminotransferase subfamily. Homodimer. It depends on pyridoxal 5'-phosphate as a cofactor.

It carries out the reaction L-histidinol phosphate + 2-oxoglutarate = 3-(imidazol-4-yl)-2-oxopropyl phosphate + L-glutamate. It functions in the pathway amino-acid biosynthesis; L-histidine biosynthesis; L-histidine from 5-phospho-alpha-D-ribose 1-diphosphate: step 7/9. In Nitrosococcus oceani (strain ATCC 19707 / BCRC 17464 / JCM 30415 / NCIMB 11848 / C-107), this protein is Histidinol-phosphate aminotransferase 1.